A 435-amino-acid polypeptide reads, in one-letter code: tRNA-2-methylthio-N(6)-dimethylallyladenosine synthase (435 aa).

The MTTase N-terminal domain occupies 2–117 (KKASIITYGC…IPQAIEKIEN (116 aa)). 6 residues coordinate [4Fe-4S] cluster: C11, C47, C80, C154, C158, and C161. The region spanning 140-370 (FGSDQTASIS…MEVQNKCSFY (231 aa)) is the Radical SAM core domain. The region spanning 373 to 435 (SKYKGRIVKV…KTWTLYGEIV (63 aa)) is the TRAM domain.

The protein belongs to the methylthiotransferase family. MiaB subfamily. Monomer. [4Fe-4S] cluster is required as a cofactor.

Its subcellular location is the cytoplasm. The catalysed reaction is N(6)-dimethylallyladenosine(37) in tRNA + (sulfur carrier)-SH + AH2 + 2 S-adenosyl-L-methionine = 2-methylsulfanyl-N(6)-dimethylallyladenosine(37) in tRNA + (sulfur carrier)-H + 5'-deoxyadenosine + L-methionine + A + S-adenosyl-L-homocysteine + 2 H(+). Catalyzes the methylthiolation of N6-(dimethylallyl)adenosine (i(6)A), leading to the formation of 2-methylthio-N6-(dimethylallyl)adenosine (ms(2)i(6)A) at position 37 in tRNAs that read codons beginning with uridine. This chain is tRNA-2-methylthio-N(6)-dimethylallyladenosine synthase, found in Fusobacterium nucleatum subsp. nucleatum (strain ATCC 25586 / DSM 15643 / BCRC 10681 / CIP 101130 / JCM 8532 / KCTC 2640 / LMG 13131 / VPI 4355).